A 365-amino-acid chain; its full sequence is Cobalt-precorrin-5B C(1)-methyltransferase (365 aa).

The protein belongs to the CbiD family.

It carries out the reaction Co-precorrin-5B + S-adenosyl-L-methionine = Co-precorrin-6A + S-adenosyl-L-homocysteine. It functions in the pathway cofactor biosynthesis; adenosylcobalamin biosynthesis; cob(II)yrinate a,c-diamide from sirohydrochlorin (anaerobic route): step 6/10. In terms of biological role, catalyzes the methylation of C-1 in cobalt-precorrin-5B to form cobalt-precorrin-6A. The chain is Cobalt-precorrin-5B C(1)-methyltransferase from Pseudomonas fluorescens (strain Pf0-1).